Here is a 196-residue protein sequence, read N- to C-terminus: Putative tyrosine-protein phosphatase OCA1 (196 aa).

A Tyrosine-protein phosphatase domain is found at 33–192 (NFCPVEKQLY…SVQIDPTKMP (160 aa)). Catalysis depends on cysteine 130, which acts as the Phosphocysteine intermediate.

The protein belongs to the protein-tyrosine phosphatase family.

The protein localises to the cytoplasm. The catalysed reaction is O-phospho-L-tyrosyl-[protein] + H2O = L-tyrosyl-[protein] + phosphate. Functionally, putative tyrosine-protein phosphatase required for protection against superoxide stress. This chain is Putative tyrosine-protein phosphatase OCA1 (OCA1), found in Debaryomyces hansenii (strain ATCC 36239 / CBS 767 / BCRC 21394 / JCM 1990 / NBRC 0083 / IGC 2968) (Yeast).